The following is a 384-amino-acid chain: Cytochrome b (384 aa).

The next 4 helical transmembrane spans lie at 32–52, 76–98, 113–133, and 179–199; these read FGFL…FLAI, WLLR…IHIS, TWVV…MGYV, and FFSF…VHMA. Heme b contacts are provided by His-82 and His-96. Heme b contacts are provided by His-183 and His-197. Residue His-202 participates in a ubiquinone binding. Transmembrane regions (helical) follow at residues 225-245, 289-309, 321-341, and 348-368; these read FIIK…LFVY, LGGV…PWIT, LYKK…WIGG, and YVVI…IFIP.

The protein belongs to the cytochrome b family. As to quaternary structure, the main subunits of complex b-c1 are: cytochrome b, cytochrome c1 and the Rieske protein. It depends on heme b as a cofactor.

It is found in the mitochondrion inner membrane. Its function is as follows. Component of the ubiquinol-cytochrome c reductase complex (complex III or cytochrome b-c1 complex) that is part of the mitochondrial respiratory chain. The b-c1 complex mediates electron transfer from ubiquinol to cytochrome c. Contributes to the generation of a proton gradient across the mitochondrial membrane that is then used for ATP synthesis. This chain is Cytochrome b (MT-CYB), found in Cyanidium caldarium (Red alga).